Here is an 871-residue protein sequence, read N- to C-terminus: Protein argonaute-2 (871 aa).

One can recognise a PAZ domain in the interval 232-351 (PVIEFMCEVL…LPLEVCNIVA (120 aa)). Interaction with guide RNA stretches follow at residues 314–319 (YFKDRH) and 536–578 (GKTP…LCLK). Residues 529–830 (LVVVILPGKT…VAFRARYHLV (302 aa)) enclose the Piwi domain. Positions 599–602 (FQQP) are interaction with GW182 family members. Asp609 contacts a divalent metal cation. The interaction with GW182 family members stretch occupies residues 662–672 (LIQFYKSTRFK). Position 681 (Asp681) interacts with a divalent metal cation. Interaction with guide RNA regions lie at residues 721–722 (KR), 765–773 (HAGIQGTSR), and 802–824 (YVRCTRSVSIPAPAYYAHLVAFR). Residue His819 participates in a divalent metal cation binding. Residues 834–856 (HDSAEGSHTSGQSNGRDQQALAK) are disordered. The segment covering 839 to 850 (GSHTSGQSNGRD) has biased composition (polar residues).

The protein belongs to the argonaute family. Ago subfamily. Component of the RISC loading complex (RLC), or micro-RNA (miRNA) loading complex (miRLC), which is composed of dicer1, ago2 and tarbp2. Note that the trimeric RLC/miRLC is also referred to as RISC. It depends on Mg(2+) as a cofactor. Mn(2+) serves as cofactor.

The protein resides in the cytoplasm. It localises to the P-body. It carries out the reaction Endonucleolytic cleavage to 5'-phosphomonoester.. Functionally, required for RNA-mediated gene silencing (RNAi) by the RNA-induced silencing complex (RISC). The 'minimal RISC' appears to include ago2 bound to a short guide RNA such as a microRNA (miRNA) or short interfering RNA (siRNA). These guide RNAs direct RISC to complementary mRNAs that are targets for RISC-mediated gene silencing. The precise mechanism of gene silencing depends on the degree of complementarity between the miRNA or siRNA and its target. Binding of RISC to a perfectly complementary mRNA generally results in silencing due to endonucleolytic cleavage of the mRNA specifically by ago2. Binding of RISC to a partially complementary mRNA results in silencing through inhibition of translation, and this is independent of endonuclease activity. The inhibition of translational initiation leads to the accumulation of the affected mRNA in cytoplasmic processing bodies (P-bodies), where mRNA degradation may subsequently occur. The protein is Protein argonaute-2 (ago2) of Xenopus tropicalis (Western clawed frog).